Here is a 474-residue protein sequence, read N- to C-terminus: Dihydrolipoyl dehydrogenase (474 aa).

FAD-binding positions include 39–47, K56, and A118; that span reads EKDAYGGTC. Cysteines 47 and 52 form a disulfide. NAD(+) is bound by residues 186–190, E209, and 275–278; these read GGGYI and AVGR. The FAD site is built by D318 and A326. H450 (proton acceptor) is an active-site residue.

The protein belongs to the class-I pyridine nucleotide-disulfide oxidoreductase family. Homodimer. FAD is required as a cofactor.

It is found in the cytoplasm. It catalyses the reaction N(6)-[(R)-dihydrolipoyl]-L-lysyl-[protein] + NAD(+) = N(6)-[(R)-lipoyl]-L-lysyl-[protein] + NADH + H(+). The sequence is that of Dihydrolipoyl dehydrogenase (lpdA) from Halobacterium salinarum (strain ATCC 700922 / JCM 11081 / NRC-1) (Halobacterium halobium).